A 495-amino-acid polypeptide reads, in one-letter code: Acyltransferase abl6 (495 aa).

Catalysis depends on His-171, which acts as the Proton acceptor.

The protein belongs to the plant acyltransferase family.

Its function is as follows. Acyltransferase; part of the gene cluster that mediates the biosynthesis of abscisic acid (ABA), a phytohormone that acts antagonistically toward salicylic acid (SA), jasmonic acid (JA) and ethylene (ETH) signaling, to impede plant defense responses. The first step of the pathway catalyzes the reaction from farnesyl diphosphate to alpha-ionylideneethane performed by the alpha-ionylideneethane synthase abl3 via a three-step reaction mechanism involving 2 neutral intermediates, beta-farnesene and allofarnesene. The cytochrome P450 monooxygenase abl1 might then be involved in the conversion of alpha-ionylideneethane to alpha-ionylideneacetic acid. Alpha-ionylideneacetic acid is further converted to abscisic acid in 2 steps involving the cytochrome P450 monooxygenase abl2 and the short-chain dehydrogenase/reductase abl4, via the intermediates 1'-deoxy-ABA or 1',4'-trans-diol-ABA, depending on the order of action of these 2 enzymes. Abl2 is responsible for the hydroxylation of carbon atom C-1' and abl4 might be involved in the oxidation of the C-4' carbon atom. The acyltransferase abl6 seems not essential for the biosynthesis of ABA, but it may acetylate ABA as part of the synthesis of another ABA-related molecule. This chain is Acyltransferase abl6, found in Leptosphaeria maculans (strain JN3 / isolate v23.1.3 / race Av1-4-5-6-7-8) (Blackleg fungus).